Reading from the N-terminus, the 669-residue chain is MDRPVAAAAAASAASCEGAGGPGPGPGASWRPSRVAGGASASSRHPSIETLDSPTGSHVEWCKQLIAATISSQISGSVTSENVSRDYKALRDGNKLAQMEEAPLFPGESIKAIVKDVIYICPFMGAVSGTLTVTDFKMYFKNVERDPHFVLDVPLGVISRVEKIGAQSHGDNSCGIEIVCKDMRNLRLAYKQEEQRKLGIFENLNKHAFPLSNGQVLFAFNYKEKFPVNGWKVYDPVSEYKRQGLPNESWKISKINSNYEFCDTYPAIIVVPTSVKDDDLSKVAAFRAKGRVPVLSWIHPESQATITRCSQPLVGPNDKRCKEDEKYLQTIMDANAQSHKLTIFDARQNSVADTNKAKGGGYENESAYPNAELIFLEIHNIHVMRESLRKLKEIVYPSIDESHWLSNVDGTHWLEYIRVLLAGAVRIADKIESGKTSVVIHCSDGWDRTSQLTSLAMLMLDSYYRTIKGFEALIEKEWISFGHRFALRVGHGDDNHADADRSPIFLQFIDCVWQMTRQFPSAFEFNELFLITILDHLYSCLFGTFLCNCEQQRIKEDVYTNTISLWSYINSQLDEFSNPFFVNYENHVLYPVASMSHLELWVNYYVRWNPRMRPQMPIHQNLKELLAIKAELQKRVEDLQREMATRTISSSSERGSSPTHSATPVHTSV.

The residue at position 1 (Met1) is an N-acetylmethionine. Low complexity predominate over residues 1-17 (MDRPVAAAAAASAASCE). The segment at 1–55 (MDRPVAAAAAASAASCEGAGGPGPGPGASWRPSRVAGGASASSRHPSIETLDSPT) is disordered. Residues Ser47 and Ser53 each carry the phosphoserine modification. One can recognise a GRAM domain in the interval 94-165 (NKLAQMEEAP…GVISRVEKIG (72 aa)). Residues 230-605 (GWKVYDPVSE…SHLELWVNYY (376 aa)) enclose the Myotubularin phosphatase domain. A 1,2-diacyl-sn-glycero-3-phospho-(1D-myo-inositol-3-phosphate) contacts are provided by Asn355, Asn380, and Ile381. Cys442 (phosphocysteine intermediate) is an active-site residue. Positions 443, 444, 445, 446, 447, 448, and 488 each coordinate a 1,2-diacyl-sn-glycero-3-phospho-(1D-myo-inositol-3-phosphate). Residue Ser443 participates in phosphate binding. Residues Gly445, Trp446, Asp447, and Arg448 each coordinate phosphate. The tract at residues 612–669 (MRPQMPIHQNLKELLAIKAELQKRVEDLQREMATRTISSSSERGSSPTHSATPVHTSV) is required for dimerization. Residues 644–669 (ATRTISSSSERGSSPTHSATPVHTSV) are disordered. Positions 649 to 661 (SSSSERGSSPTHS) are enriched in low complexity.

It belongs to the protein-tyrosine phosphatase family. Non-receptor class myotubularin subfamily. As to quaternary structure, homodimer. Widely expressed. Detected in skeletal muscle, heart, lung, liver and brain.

Its subcellular location is the cell membrane. The protein resides in the cytoplasm. The catalysed reaction is a 1,2-diacyl-sn-glycero-3-phospho-(1D-myo-inositol-3-phosphate) + H2O = a 1,2-diacyl-sn-glycero-3-phospho-(1D-myo-inositol) + phosphate. The enzyme catalyses 1,2-dioctanoyl-sn-glycero-3-phospho-(1-D-myo-inositol-3-phosphate) + H2O = 1,2-dioctanoyl-sn-glycero-3-phospho-(1D-myo-inositol) + phosphate. It carries out the reaction a 1,2-diacyl-sn-glycero-3-phospho-(1D-myo-inositol-3,5-bisphosphate) + H2O = a 1,2-diacyl-sn-glycero-3-phospho-(1D-myo-inositol-5-phosphate) + phosphate. Lipid phosphatase that specifically dephosphorylates the D-3 position of phosphatidylinositol 3-phosphate, generating phosphatidylinositol. Could also dephosphorylate phosphatidylinositol 3,5-bisphosphate to produce phosphatidylinositol 5-phosphate. The chain is Phosphatidylinositol-3-phosphate phosphatase MTMR1 from Mus musculus (Mouse).